We begin with the raw amino-acid sequence, 357 residues long: Large ribosomal subunit protein uL10 (357 aa).

The interval 311-357 (MVSRSAEAAERKEKEEEEEEEAEEEEAEEEEEEEEEEAAAGLGALFG) is disordered. The span at 325 to 348 (EEEEEEEAEEEEAEEEEEEEEEEA) shows a compositional bias: acidic residues.

This sequence belongs to the universal ribosomal protein uL10 family. As to quaternary structure, part of the 50S ribosomal subunit. Forms part of the ribosomal stalk which helps the ribosome interact with GTP-bound translation factors. Forms a heptameric L10(L12)2(L12)2(L12)2 complex, where L10 forms an elongated spine to which the L12 dimers bind in a sequential fashion.

Functionally, forms part of the ribosomal stalk, playing a central role in the interaction of the ribosome with GTP-bound translation factors. This Methanopyrus kandleri (strain AV19 / DSM 6324 / JCM 9639 / NBRC 100938) protein is Large ribosomal subunit protein uL10.